A 249-amino-acid polypeptide reads, in one-letter code: Type III pantothenate kinase (249 aa).

6-13 provides a ligand contact to ATP; sequence DCGNSFIK. Substrate-binding positions include tyrosine 93 and 100 to 103; that span reads GLDR. The active-site Proton acceptor is the aspartate 102. Aspartate 122 is a binding site for K(+). Residue threonine 125 participates in ATP binding. Threonine 181 lines the substrate pocket.

It belongs to the type III pantothenate kinase family. Homodimer. It depends on NH4(+) as a cofactor. The cofactor is K(+).

It localises to the cytoplasm. The enzyme catalyses (R)-pantothenate + ATP = (R)-4'-phosphopantothenate + ADP + H(+). The protein operates within cofactor biosynthesis; coenzyme A biosynthesis; CoA from (R)-pantothenate: step 1/5. Functionally, catalyzes the phosphorylation of pantothenate (Pan), the first step in CoA biosynthesis. The chain is Type III pantothenate kinase from Pseudomonas syringae pv. syringae (strain B728a).